The sequence spans 919 residues: Probable dipeptidyl-aminopeptidase B (919 aa).

A compositionally biased stretch (basic and acidic residues) spans 1–10 (MRPSDDHGET). A disordered region spans residues 1 to 50 (MRPSDDHGETSEFLPITRSRSVSAASQTSTDSSLSTESLFPGEQKPFPNV). Topologically, residues 1–92 (MRPSDDHGET…AATGGGRARR (92 aa)) are cytoplasmic. Over residues 21-38 (SVSAASQTSTDSSLSTES) the composition is skewed to low complexity. Residues 93–113 (IFWILVLLCLGGWLLAFALFL) traverse the membrane as a helical; Signal-anchor for type II membrane protein segment. Topologically, residues 114 to 919 (TGGRANYQTA…MKRSLPLLYP (806 aa)) are vacuolar. 3 N-linked (GlcNAc...) asparagine glycosylation sites follow: Asn200, Asn352, and Asn643. Ser757 functions as the Charge relay system in the catalytic mechanism. Asn811 carries an N-linked (GlcNAc...) asparagine glycan. Catalysis depends on charge relay system residues Asp834 and His867.

It belongs to the peptidase S9B family.

The protein localises to the vacuole membrane. It carries out the reaction Release of an N-terminal dipeptide, Xaa-Yaa-|-Zaa-, from a polypeptide, preferentially when Yaa is Pro, provided Zaa is neither Pro nor hydroxyproline.. Type IV dipeptidyl-peptidase which removes N-terminal dipeptides sequentially from polypeptides having unsubstituted N-termini provided that the penultimate residue is proline. The polypeptide is Probable dipeptidyl-aminopeptidase B (dapB) (Neosartorya fischeri (strain ATCC 1020 / DSM 3700 / CBS 544.65 / FGSC A1164 / JCM 1740 / NRRL 181 / WB 181) (Aspergillus fischerianus)).